The chain runs to 497 residues: Alkane hydroxylase MAH1 (497 aa).

Residues 3 to 23 (MLGFYVTFIFFLVCLFTYFFL) traverse the membrane as a helical segment. Cys444 provides a ligand contact to heme.

This sequence belongs to the cytochrome P450 family. Heme is required as a cofactor. Expressed in the expanding regions of the inflorescence stems, specifically to the epidermal pavement cells, petioles and siliques.

It localises to the endoplasmic reticulum membrane. Involved in the formation of secondary alcohols and ketones in stem cuticular wax. Catalyzes the hydroxylation of a methylene unit in the middle of alkane molecules to form secondary alcohols and possibly also a second hydroxylation leading to the corresponding ketones. The protein is Alkane hydroxylase MAH1 of Arabidopsis thaliana (Mouse-ear cress).